Consider the following 37-residue polypeptide: Peptide encoded by miPEP164a (37 aa).

Functionally, regulatory peptide encoded by the primary transcript (pri-miR164a) of the microRNA miR164a that enhances the accumulation of its corresponding mature miRNA. Acts probably as a transcriptional activator of its corresponding pri-miRNA. This is Peptide encoded by miPEP164a from Arabidopsis thaliana (Mouse-ear cress).